The chain runs to 244 residues: Sepiapterin reductase (244 aa).

NADP(+) is bound by residues 9–15 (GAGKGIG), 40–42 (SRT), 66–67 (DI), and N93. F99 is a binding site for substrate. T116 provides a ligand contact to NADP(+). The substrate site is built by S145 and Y158. Residues Y158, K162, and 191-196 (VYTPMW) contribute to the NADP(+) site. W196 contacts substrate.

The protein belongs to the short-chain dehydrogenases/reductases (SDR) family. Homodimer.

It localises to the cytoplasm. The catalysed reaction is L-threo-7,8-dihydrobiopterin + NADP(+) = L-sepiapterin + NADPH + H(+). It carries out the reaction L-threo-tetrahydrobiopterin + 2 NADP(+) = 6-pyruvoyl-5,6,7,8-tetrahydropterin + 2 NADPH + 2 H(+). Its activity is regulated as follows. Slightly inhibited by N-acetyldopamine but not by N-acetylserotonin or melatonin. Its function is as follows. Catalyzes the final reductions in tetra-hydrobiopterin biosynthesis to form 5,6,7,8-tetrahydrobiopterin. The chain is Sepiapterin reductase from Chlorobaculum tepidum (strain ATCC 49652 / DSM 12025 / NBRC 103806 / TLS) (Chlorobium tepidum).